The chain runs to 381 residues: Succinyl-diaminopimelate desuccinylase (381 aa).

His-72 contributes to the Zn(2+) binding site. Asp-74 is a catalytic residue. A Zn(2+)-binding site is contributed by Asp-105. Glu-139 functions as the Proton acceptor in the catalytic mechanism. Zn(2+)-binding residues include Glu-140, Glu-168, and His-354.

Belongs to the peptidase M20A family. DapE subfamily. In terms of assembly, homodimer. The cofactor is Zn(2+). Co(2+) is required as a cofactor.

The catalysed reaction is N-succinyl-(2S,6S)-2,6-diaminopimelate + H2O = (2S,6S)-2,6-diaminopimelate + succinate. The protein operates within amino-acid biosynthesis; L-lysine biosynthesis via DAP pathway; LL-2,6-diaminopimelate from (S)-tetrahydrodipicolinate (succinylase route): step 3/3. In terms of biological role, catalyzes the hydrolysis of N-succinyl-L,L-diaminopimelic acid (SDAP), forming succinate and LL-2,6-diaminopimelate (DAP), an intermediate involved in the bacterial biosynthesis of lysine and meso-diaminopimelic acid, an essential component of bacterial cell walls. The sequence is that of Succinyl-diaminopimelate desuccinylase from Shewanella sp. (strain ANA-3).